Consider the following 289-residue polypeptide: Shikimate dehydrogenase (NADP(+)) (289 aa).

Residues 22 to 24 and T69 each bind shikimate; that span reads SRS. The Proton acceptor role is filled by K73. E85 serves as a coordination point for NADP(+). Positions 94 and 109 each coordinate shikimate. Residues 134-138, 158-163, and I226 each bind NADP(+); these read GAGGA and NRTLSR. Residue Y228 coordinates shikimate. G249 serves as a coordination point for NADP(+).

It belongs to the shikimate dehydrogenase family. As to quaternary structure, homodimer.

It carries out the reaction shikimate + NADP(+) = 3-dehydroshikimate + NADPH + H(+). Its pathway is metabolic intermediate biosynthesis; chorismate biosynthesis; chorismate from D-erythrose 4-phosphate and phosphoenolpyruvate: step 4/7. Functionally, involved in the biosynthesis of the chorismate, which leads to the biosynthesis of aromatic amino acids. Catalyzes the reversible NADPH linked reduction of 3-dehydroshikimate (DHSA) to yield shikimate (SA). The polypeptide is Shikimate dehydrogenase (NADP(+)) (Brucella abortus (strain S19)).